Here is a 112-residue protein sequence, read N- to C-terminus: uncharacterized protein (112 aa).

2 helical membrane-spanning segments follow: residues 44 to 63 (VITG…LHSL) and 68 to 90 (LAAL…KLVH).

Its subcellular location is the cell membrane. This is an uncharacterized protein from Archaeoglobus fulgidus (strain ATCC 49558 / DSM 4304 / JCM 9628 / NBRC 100126 / VC-16).